The chain runs to 149 residues: Nucleoside diphosphate kinase (149 aa).

ATP is bound by residues lysine 9, phenylalanine 57, arginine 85, threonine 91, arginine 102, and asparagine 112. Histidine 115 serves as the catalytic Pros-phosphohistidine intermediate.

It belongs to the NDK family. Mg(2+) serves as cofactor.

It localises to the cytoplasm. It carries out the reaction a 2'-deoxyribonucleoside 5'-diphosphate + ATP = a 2'-deoxyribonucleoside 5'-triphosphate + ADP. It catalyses the reaction a ribonucleoside 5'-diphosphate + ATP = a ribonucleoside 5'-triphosphate + ADP. Functionally, major role in the synthesis of nucleoside triphosphates other than ATP. The ATP gamma phosphate is transferred to the NDP beta phosphate via a ping-pong mechanism, using a phosphorylated active-site intermediate. The protein is Nucleoside diphosphate kinase of Methanosarcina barkeri (strain Fusaro / DSM 804).